The primary structure comprises 1205 residues: Bromodomain and PHD finger-containing protein 3 (1205 aa).

Disordered regions lie at residues 1–27 and 75–121; these read MRKP…KCSP and NSNK…SFRM. The residue at position 17 (S17) is a Phosphoserine. The span at 75–84 shows a compositional bias: polar residues; sequence NSNKENSEQP. A compositionally biased stretch (basic residues) spans 89-99; the sequence is KSKKPSSKGKK. A PHD-type 1 zinc finger spans residues 212–262; that stretch reads DAFCCVCLDDECHNSNVILFCDICNLAVHQECYGVPYIPEGQWLCRCCLQS. The C2HC pre-PHD-type zinc finger occupies 266–299; sequence PVDCILCPNKGGAFKQTSDGHWAHVVCAIWIPEV. Residues 323–387 form a PHD-type 2 zinc finger; sequence LTCYICKQKG…RKTAYCEAHS (65 aa). Positions 387–472 are disordered; the sequence is SPPGAATARR…AGQDTPSTLP (86 aa). Residues S400 and S403 each carry the phosphoserine modification. The segment covering 417–432 has biased composition (acidic residues); it reads DGEEEEEEEVEEEEQE. Residues 444-456 are compositionally biased toward basic residues; sequence VPKKSKMSLKQKI. 3 positions are modified to N6-acetyllysine: K447, K449, and K671. The Bromo domain maps to 589-693; the sequence is LELMPFNVLL…DLGGAILRHA (105 aa). Residues S713 and S740 each carry the phosphoserine modification. Residues 779–897 are disordered; the sequence is RQKLAQPPPP…LQLGNEPLQR (119 aa). The span at 817-827 shows a compositional bias: acidic residues; that stretch reads LQEEPEDDGDR. The span at 839 to 851 shows a compositional bias: low complexity; it reads EPTGPAPSLSEQE. The residue at position 900 (S900) is a Phosphoserine. Disordered stretches follow at residues 907 to 926 and 931 to 1015; these read LSLM…VGRR and FKKA…SECS. Basic and acidic residues predominate over residues 942–955; sequence RSPDRVLENGEDHG. S962 and S965 each carry phosphoserine. The segment covering 980 to 991 has biased composition (basic and acidic residues); that stretch reads SCSESEGERSPQ. The 84-residue stretch at 1076-1159 folds into the PWWP domain; sequence PLELVWAKCR…RDKVLPLGVE (84 aa).

As to quaternary structure, component of some HBO1 complex composed of KAT7/HBO1, MEAF6, ING4 or ING5, and BRPF3. Component of the MOZ/MORF complex composed at least of ING5, KAT6A, KAT6B, MEAF6 and one of BRPF1, BRD1/BRPF2 and BRPF3. Interacts with KAT7/HBO1; the interaction is direct.

It is found in the nucleus. Its function is as follows. Scaffold subunit of various histone acetyltransferase (HAT) complexes, such as the MOZ/MORF and HBO1 complexes, which have a histone H3 acetyltransferase activity. Plays a role in DNA replication initiation by directing KAT7/HBO1 specificity towards histone H3 'Lys-14' acetylation (H3K14ac), thereby facilitating the activation of replication origins. Component of the MOZ/MORF complex which has a histone H3 acetyltransferase activity. The protein is Bromodomain and PHD finger-containing protein 3 of Homo sapiens (Human).